Reading from the N-terminus, the 125-residue chain is MAKYLAQIIVMGVQVVGRAFARALRQEFAASQAAADARGRAGHQSAAASNLSGLSLQEAQQILNVSKLSPEEVQKNYEHLFKVNDKSVGGSFYLQSKVVRAKERLDEELRIQAQEDREKGQKPKT.

The J-like stretch occupies residues 58–110 (EAQQILNVSKLSPEEVQKNYEHLFKVNDKSVGGSFYLQSKVVRAKERLDEELR). Ser-69 bears the Phosphoserine mark.

It belongs to the TIM16/PAM16 family. As to quaternary structure, probable component of the PAM complex at least composed of a mitochondrial HSP70 protein, GRPEL1 or GRPEL2, TIMM44, TIMM16/PAM16 and TIMM14/DNAJC19. Interacts with DNAJC19. Directly interacts with DNAJC15; this interaction counteracts DNAJC15-dependent stimulation of HSPA9 ATPase activity. Associates with the TIM23 complex. In terms of tissue distribution, expressed in trabecular bone and cartilage and by differentiated chondrocytes localized in the hypertrophic zone and by osteoblasts at early developmental stages.

The protein resides in the mitochondrion inner membrane. Functionally, regulates ATP-dependent protein translocation into the mitochondrial matrix. Inhibits DNAJC19 stimulation of HSPA9/Mortalin ATPase activity. In Mus musculus (Mouse), this protein is Mitochondrial import inner membrane translocase subunit TIM16.